A 732-amino-acid polypeptide reads, in one-letter code: Ets DNA-binding protein pokkuri (732 aa).

In terms of domain architecture, PNT spans 33-117 (SSQLAELKTQ…NVLQMLIIES (85 aa)). The segment at 133–295 (SRYPLSPHSH…PPGTPILKDI (163 aa)) is disordered. Pro residues predominate over residues 141–157 (SHPPTPTWPPLNAPPEN). A compositionally biased stretch (polar residues) spans 176-193 (NSVTLSPPPSVDSQASSP). A compositionally biased stretch (low complexity) spans 205–240 (GAAPGSAGGSAPAAGGATNTSNPTSSSASSTGSNGS). A DNA-binding region (ETS) is located at residues 396–479 (RLLWDFLQQL…QGERHCYQFL (84 aa)). 3 disordered regions span residues 496-548 (QSTP…NGPM), 590-647 (GPPP…TATS), and 674-732 (VAAS…HMQQ). Residues 506–539 (SPSMPQGSSQAPGSPAGQNWNPQQQSQQQQQSPQ) show a composition bias toward low complexity. At S543 the chain carries Phosphoserine. Over residues 637-647 (LSVSSKSTATS) the composition is skewed to polar residues. Residues S677, S682, and S696 each carry the phosphoserine modification. Residues 690–709 (AGASNASSSPRPMDQASEQA) show a composition bias toward polar residues.

Belongs to the ETS family. Phosphorylated in response to MAPK signaling. May be phosphorylated by rl. In terms of tissue distribution, expressed in R7 and cone cells of the eye.

The protein localises to the nucleus. Ets-related protein that functions as a negative regulator of photoreceptor development acting antagonistically to pnt and the proneural signal mediated by RAS. It acts upstream of SINA to inhibit R7 development. The polypeptide is Ets DNA-binding protein pokkuri (aop) (Drosophila melanogaster (Fruit fly)).